Here is a 462-residue protein sequence, read N- to C-terminus: Anthranilate synthase component 1 (462 aa).

Residues Ser-46 and 243 to 245 (PHM) each bind L-tryptophan. 278–279 (GT) contacts chorismate. Mg(2+) is bound at residue Glu-305. Residues Tyr-394, Arg-414, 428-430 (SGG), and Gly-430 each bind chorismate. Glu-444 lines the Mg(2+) pocket.

Belongs to the anthranilate synthase component I family. Heterotetramer consisting of two non-identical subunits: a beta subunit (TrpG) and a large alpha subunit (TrpE). Requires Mg(2+) as cofactor.

The catalysed reaction is chorismate + L-glutamine = anthranilate + pyruvate + L-glutamate + H(+). The protein operates within amino-acid biosynthesis; L-tryptophan biosynthesis; L-tryptophan from chorismate: step 1/5. Feedback inhibited by tryptophan. Its function is as follows. Part of a heterotetrameric complex that catalyzes the two-step biosynthesis of anthranilate, an intermediate in the biosynthesis of L-tryptophan. In the first step, the glutamine-binding beta subunit (TrpG) of anthranilate synthase (AS) provides the glutamine amidotransferase activity which generates ammonia as a substrate that, along with chorismate, is used in the second step, catalyzed by the large alpha subunit of AS (TrpE) to produce anthranilate. In the absence of TrpG, TrpE can synthesize anthranilate directly from chorismate and high concentrations of ammonia. The polypeptide is Anthranilate synthase component 1 (trpE) (Leptospira biflexa).